Consider the following 404-residue polypeptide: DNA replication and repair protein RecF (404 aa).

30–37 (GSNGQGKT) serves as a coordination point for ATP.

It belongs to the RecF family.

The protein resides in the cytoplasm. The RecF protein is involved in DNA metabolism; it is required for DNA replication and normal SOS inducibility. RecF binds preferentially to single-stranded, linear DNA. It also seems to bind ATP. In Clavibacter michiganensis subsp. michiganensis (strain NCPPB 382), this protein is DNA replication and repair protein RecF.